The following is a 234-amino-acid chain: Aspartate/glutamate leucyltransferase (234 aa).

The protein belongs to the R-transferase family. Bpt subfamily.

Its subcellular location is the cytoplasm. The catalysed reaction is N-terminal L-glutamyl-[protein] + L-leucyl-tRNA(Leu) = N-terminal L-leucyl-L-glutamyl-[protein] + tRNA(Leu) + H(+). The enzyme catalyses N-terminal L-aspartyl-[protein] + L-leucyl-tRNA(Leu) = N-terminal L-leucyl-L-aspartyl-[protein] + tRNA(Leu) + H(+). In terms of biological role, functions in the N-end rule pathway of protein degradation where it conjugates Leu from its aminoacyl-tRNA to the N-termini of proteins containing an N-terminal aspartate or glutamate. In Hahella chejuensis (strain KCTC 2396), this protein is Aspartate/glutamate leucyltransferase.